Reading from the N-terminus, the 307-residue chain is tRNA pseudouridine synthase B (307 aa).

The Nucleophile role is filled by aspartate 48.

The protein belongs to the pseudouridine synthase TruB family. Type 1 subfamily.

The enzyme catalyses uridine(55) in tRNA = pseudouridine(55) in tRNA. In terms of biological role, responsible for synthesis of pseudouridine from uracil-55 in the psi GC loop of transfer RNAs. This chain is tRNA pseudouridine synthase B, found in Neisseria meningitidis serogroup B (strain ATCC BAA-335 / MC58).